The chain runs to 495 residues: Acetyl-coenzyme A carboxylase carboxyl transferase subunit beta, chloroplastic (495 aa).

A disordered region spans residues 188–208 (SRNSSENEGSSRRTRTKGSDL). Residues 226–495 (LWVQCENCYG…PLNQKSSKIK (270 aa)) enclose the CoA carboxyltransferase N-terminal domain. Residues cysteine 230, cysteine 233, cysteine 249, and cysteine 252 each coordinate Zn(2+). Residues 230-252 (CENCYGLNYKKFFKSKMNICEQC) form a C4-type zinc finger.

Belongs to the AccD/PCCB family. In terms of assembly, acetyl-CoA carboxylase is a heterohexamer composed of biotin carboxyl carrier protein, biotin carboxylase and 2 subunits each of ACCase subunit alpha and ACCase plastid-coded subunit beta (accD). Zn(2+) is required as a cofactor.

The protein resides in the plastid. It localises to the chloroplast stroma. It catalyses the reaction N(6)-carboxybiotinyl-L-lysyl-[protein] + acetyl-CoA = N(6)-biotinyl-L-lysyl-[protein] + malonyl-CoA. Its pathway is lipid metabolism; malonyl-CoA biosynthesis; malonyl-CoA from acetyl-CoA: step 1/1. Its function is as follows. Component of the acetyl coenzyme A carboxylase (ACC) complex. Biotin carboxylase (BC) catalyzes the carboxylation of biotin on its carrier protein (BCCP) and then the CO(2) group is transferred by the transcarboxylase to acetyl-CoA to form malonyl-CoA. The chain is Acetyl-coenzyme A carboxylase carboxyl transferase subunit beta, chloroplastic from Nicotiana tomentosiformis (Tobacco).